The sequence spans 107 residues: Integration host factor subunit alpha (107 aa).

Belongs to the bacterial histone-like protein family. Heterodimer of an alpha and a beta chain.

Functionally, this protein is one of the two subunits of integration host factor, a specific DNA-binding protein that functions in genetic recombination as well as in transcriptional and translational control. The polypeptide is Integration host factor subunit alpha (Mesorhizobium japonicum (strain LMG 29417 / CECT 9101 / MAFF 303099) (Mesorhizobium loti (strain MAFF 303099))).